The following is a 522-amino-acid chain: Cytochrome P450 714C2 (522 aa).

Residues 1-11 (MELFSSQQWLA) are Lumenal-facing. A helical; Signal-anchor for type III membrane protein transmembrane segment spans residues 12 to 32 (LLPPIILCILLFSYVYIILWL). Residues 33-522 (RPERLRQKLR…KGVPLIFREL (490 aa)) lie on the Cytoplasmic side of the membrane. Cys-470 contributes to the heme binding site.

The protein belongs to the cytochrome P450 family. The cofactor is heme.

It localises to the membrane. Functionally, probably not involved in gibberellin metabolism since over-expression of CYP714C2 in a heterologous system does not induce semi-dwarfism. This Oryza sativa subsp. japonica (Rice) protein is Cytochrome P450 714C2 (CYP714C2).